Here is a 415-residue protein sequence, read N- to C-terminus: DNA primase DnaG (415 aa).

The Toprim domain maps to 171 to 250 (DAIIIVEGRA…AFSPRGKSVE (80 aa)). The Mg(2+) site is built by Glu-177, Asp-219, and Asp-221. The tract at residues 280-323 (ELPGDLGGRPARTAPAHDEGGNSDTTGKQAVSQKRIRDGTSKVP) is disordered. The segment covering 301–311 (NSDTTGKQAVS) has biased composition (polar residues).

This sequence belongs to the archaeal DnaG primase family. In terms of assembly, forms a ternary complex with MCM helicase and DNA. Mg(2+) serves as cofactor.

It carries out the reaction ssDNA + n NTP = ssDNA/pppN(pN)n-1 hybrid + (n-1) diphosphate.. RNA polymerase that catalyzes the synthesis of short RNA molecules used as primers for DNA polymerase during DNA replication. This Methanoregula boonei (strain DSM 21154 / JCM 14090 / 6A8) protein is DNA primase DnaG.